Here is a 130-residue protein sequence, read N- to C-terminus: MIGNWNYGTGRRKSAVARVFIKAGKGDIIVNGKPIADYFSRETSLMIVRQPLELTNHAQTFDIKVNVTGGGETGQAGAVRHGITRALIDYDATLKPSLSNAGFVTRDAREVERKKVGLHKARRAKQFSKR.

The protein belongs to the universal ribosomal protein uS9 family.

The polypeptide is Small ribosomal subunit protein uS9 (Burkholderia thailandensis (strain ATCC 700388 / DSM 13276 / CCUG 48851 / CIP 106301 / E264)).